The sequence spans 442 residues: Serine--tRNA ligase (442 aa).

An L-serine-binding site is contributed by Thr-249–Glu-251. Arg-280 to Glu-282 is a binding site for ATP. Glu-303 contributes to the L-serine binding site. Position 367-370 (Glu-367–Ser-370) interacts with ATP. Ser-402 contributes to the L-serine binding site.

This sequence belongs to the class-II aminoacyl-tRNA synthetase family. Type-1 seryl-tRNA synthetase subfamily. In terms of assembly, homodimer. The tRNA molecule binds across the dimer.

It localises to the cytoplasm. The catalysed reaction is tRNA(Ser) + L-serine + ATP = L-seryl-tRNA(Ser) + AMP + diphosphate + H(+). It catalyses the reaction tRNA(Sec) + L-serine + ATP = L-seryl-tRNA(Sec) + AMP + diphosphate + H(+). It functions in the pathway aminoacyl-tRNA biosynthesis; selenocysteinyl-tRNA(Sec) biosynthesis; L-seryl-tRNA(Sec) from L-serine and tRNA(Sec): step 1/1. In terms of biological role, catalyzes the attachment of serine to tRNA(Ser). Is also able to aminoacylate tRNA(Sec) with serine, to form the misacylated tRNA L-seryl-tRNA(Sec), which will be further converted into selenocysteinyl-tRNA(Sec). In Acidovorax ebreus (strain TPSY) (Diaphorobacter sp. (strain TPSY)), this protein is Serine--tRNA ligase.